The sequence spans 1025 residues: DNA polymerase (1025 aa).

Belongs to the DNA polymerase type-B family.

The enzyme catalyses DNA(n) + a 2'-deoxyribonucleoside 5'-triphosphate = DNA(n+1) + diphosphate. Replicates the viral genome. Host DNA polymerases cannot substitute for the viral enzyme in this process. The sequence is that of DNA polymerase from Noctuidae (owlet moths).